Reading from the N-terminus, the 478-residue chain is UDP-N-acetylmuramate--L-alanine ligase (478 aa).

126–132 serves as a coordination point for ATP; sequence GTHGKTT.

Belongs to the MurCDEF family.

The protein localises to the cytoplasm. The enzyme catalyses UDP-N-acetyl-alpha-D-muramate + L-alanine + ATP = UDP-N-acetyl-alpha-D-muramoyl-L-alanine + ADP + phosphate + H(+). The protein operates within cell wall biogenesis; peptidoglycan biosynthesis. Its function is as follows. Cell wall formation. This Synechococcus sp. (strain JA-2-3B'a(2-13)) (Cyanobacteria bacterium Yellowstone B-Prime) protein is UDP-N-acetylmuramate--L-alanine ligase.